A 109-amino-acid chain; its full sequence is Small ribosomal subunit protein uS10c (109 aa).

The protein belongs to the universal ribosomal protein uS10 family. Part of the 30S ribosomal subunit.

It is found in the plastid. Its subcellular location is the chloroplast. Functionally, involved in the binding of tRNA to the ribosomes. This Cyanidium caldarium (Red alga) protein is Small ribosomal subunit protein uS10c.